The chain runs to 358 residues: Heme A synthase (358 aa).

8 helical membrane-spanning segments follow: residues 22–42, 107–127, 133–153, 172–192, 208–228, 269–289, 302–322, and 324–344; these read IQVW…VGGA, VLGR…WATK, ILFP…IGWW, LAFH…LSRG, FAAW…LVAG, FIHR…AFYV, AFLI…TLLH, and VPIS…CFAV. Residue His271 participates in heme binding. Residue His332 participates in heme binding.

It belongs to the COX15/CtaA family. Type 2 subfamily. As to quaternary structure, interacts with CtaB. Heme b serves as cofactor.

The protein localises to the cell membrane. It carries out the reaction Fe(II)-heme o + 2 A + H2O = Fe(II)-heme a + 2 AH2. It participates in porphyrin-containing compound metabolism; heme A biosynthesis; heme A from heme O: step 1/1. Functionally, catalyzes the conversion of heme O to heme A by two successive hydroxylations of the methyl group at C8. The first hydroxylation forms heme I, the second hydroxylation results in an unstable dihydroxymethyl group, which spontaneously dehydrates, resulting in the formyl group of heme A. The polypeptide is Heme A synthase (Bartonella tribocorum (strain CIP 105476 / IBS 506)).